A 75-amino-acid chain; its full sequence is U6-lycotoxin-Ls1h (75 aa).

A signal peptide spans 1 to 21; that stretch reads MKLLLFTALVLVVISLIEVEA. The propeptide occupies 22–25; sequence ENER.

Belongs to the neurotoxin 19 (CSTX) family. 06 (U6-Lctx) subfamily. Contains 4 disulfide bonds. In terms of tissue distribution, expressed by the venom gland.

The protein resides in the secreted. The polypeptide is U6-lycotoxin-Ls1h (Lycosa singoriensis (Wolf spider)).